A 307-amino-acid chain; its full sequence is MASVLSYESLVHAVAGAVGSVTAMTVFFPLDTARLRLQVDEKRKSKTTHAVLLEIIKEEGLLAPYRGWFPVISSLCCSNFVYFYTFNSLKAVWVKGQRSSTGKDLVVGFVAGVVNVLLTTPLWVVNTRLKLQGAKFRNEDIIPTNYKGIIDAFHQIIRDEGILALWNGTFPSLLLVFNPAIQFMFYEGLKRQLLKKRMKLSSLDVFIIGAIAKAIATTVTYPMQTVQSILRFGRHRLNPENRTLGSLRNVLSLLHQRVKRFGIMGLYKGLEAKLLQTVLTAALMFLVYEKLTAATFTVMGLKSTHKH.

Over 1 to 9 the chain is Cytoplasmic; sequence MASVLSYES. Positions 1–147 are necessary for targeting to peroxisomes and interaction with PEX19; sequence MASVLSYESL…NEDIIPTNYK (147 aa). Solcar repeat units lie at residues 7–92, 99–192, and 200–294; these read YESL…LKAV, SSTG…LKRQ, and LSSL…LTAA. Residues 10 to 30 traverse the membrane as a helical segment; that stretch reads LVHAVAGAVGSVTAMTVFFPL. Over 31–66 the chain is Lumenal; it reads DTARLRLQVDEKRKSKTTHAVLLEIIKEEGLLAPYR. Residues 67 to 87 traverse the membrane as a helical segment; sequence GWFPVISSLCCSNFVYFYTFN. The Cytoplasmic segment spans residues 88–104; that stretch reads SLKAVWVKGQRSSTGKD. A helical membrane pass occupies residues 105-125; the sequence is LVVGFVAGVVNVLLTTPLWVV. The Lumenal segment spans residues 126–160; sequence NTRLKLQGAKFRNEDIIPTNYKGIIDAFHQIIRDE. Residues 161-181 traverse the membrane as a helical segment; sequence GILALWNGTFPSLLLVFNPAI. Residues 182–202 are Cytoplasmic-facing; sequence QFMFYEGLKRQLLKKRMKLSS. Residues 190–199 carry the Peroxisome localization signal motif; it reads KRQLLKKRMK. Residues 203-223 form a helical membrane-spanning segment; that stretch reads LDVFIIGAIAKAIATTVTYPM. The Lumenal segment spans residues 224–280; that stretch reads QTVQSILRFGRHRLNPENRTLGSLRNVLSLLHQRVKRFGIMGLYKGLEAKLLQTVLT. Positions 244-307 are necessary for targeting to peroxisomes and interaction with PEX19; the sequence is LGSLRNVLSL…VMGLKSTHKH (64 aa). The helical transmembrane segment at 281–301 threads the bilayer; the sequence is AALMFLVYEKLTAATFTVMGL. The Cytoplasmic segment spans residues 302–307; it reads KSTHKH.

The protein belongs to the mitochondrial carrier (TC 2.A.29) family. As to quaternary structure, interacts (via N- and C-terminus peroxisomal targeting regions) with PEX19; the interaction occurs with the newly synthesized SLC25A17 in the cytosol. As to expression, expressed in liver, kidney, heart, spleen, muscle and lung.

The protein localises to the cytoplasm. The protein resides in the peroxisome membrane. It carries out the reaction AMP(out) + CoA(in) = AMP(in) + CoA(out). The catalysed reaction is 3'-dephospho-CoA(in) + AMP(out) = 3'-dephospho-CoA(out) + AMP(in). The enzyme catalyses acetyl-CoA(in) + AMP(out) = acetyl-CoA(out) + AMP(in). It catalyses the reaction AMP(in) + NAD(+)(out) = AMP(out) + NAD(+)(in). It carries out the reaction FAD(in) + AMP(out) = FAD(out) + AMP(in). The catalysed reaction is FMN(in) + AMP(out) = FMN(out) + AMP(in). The enzyme catalyses AMP(in) + ADP(out) = AMP(out) + ADP(in). It catalyses the reaction adenosine 3',5'-bisphosphate(in) + AMP(out) = adenosine 3',5'-bisphosphate(out) + AMP(in). It carries out the reaction FAD(in) + CoA(out) = FAD(out) + CoA(in). The catalysed reaction is FAD(in) + adenosine 3',5'-bisphosphate(out) = FAD(out) + adenosine 3',5'-bisphosphate(in). The enzyme catalyses FMN(in) + CoA(out) = FMN(out) + CoA(in). It catalyses the reaction FMN(in) + adenosine 3',5'-bisphosphate(out) = FMN(out) + adenosine 3',5'-bisphosphate(in). It carries out the reaction FAD(out) + NAD(+)(in) = FAD(in) + NAD(+)(out). The catalysed reaction is FMN(out) + NAD(+)(in) = FMN(in) + NAD(+)(out). The enzyme catalyses NAD(+)(in) + CoA(out) = NAD(+)(out) + CoA(in). It catalyses the reaction adenosine 3',5'-bisphosphate(out) + NAD(+)(in) = adenosine 3',5'-bisphosphate(in) + NAD(+)(out). It carries out the reaction FMN(out) + ADP(in) = FMN(in) + ADP(out). The catalysed reaction is FAD(out) + ADP(in) = FAD(in) + ADP(out). The enzyme catalyses ADP(out) + CoA(in) = ADP(in) + CoA(out). It catalyses the reaction adenosine 3',5'-bisphosphate(in) + ADP(out) = adenosine 3',5'-bisphosphate(out) + ADP(in). Peroxisomal transporter for multiple cofactors like coenzyme A (CoA), flavin adenine dinucleotide (FAD), flavin mononucleotide (FMN) and nucleotide adenosine monophosphate (AMP), and to a lesser extent for nicotinamide adenine dinucleotide (NAD(+)), adenosine diphosphate (ADP) and adenosine 3',5'-diphosphate (PAP). May catalyze the transport of free CoA, FAD and NAD(+) from the cytosol into the peroxisomal matrix by a counter-exchange mechanism. In Mus musculus (Mouse), this protein is Peroxisomal membrane protein PMP34 (Slc25a17).